A 585-amino-acid polypeptide reads, in one-letter code: Chaperonin GroEL, chloroplastic (585 aa).

Residues Thr-55–Pro-58, Asp-113–Thr-117, Gly-442, Asn-507–Ala-509, and Asp-523 contribute to the ATP site.

Belongs to the chaperonin (HSP60) family. As to quaternary structure, forms a cylinder of 14 subunits composed of two heptameric rings stacked back-to-back. Interacts with the co-chaperonin GroES.

The protein localises to the plastid. It is found in the chloroplast. It catalyses the reaction ATP + H2O + a folded polypeptide = ADP + phosphate + an unfolded polypeptide.. Functionally, together with its co-chaperonin GroES, plays an essential role in assisting protein folding. The GroEL-GroES system forms a nano-cage that allows encapsulation of the non-native substrate proteins and provides a physical environment optimized to promote and accelerate protein folding. The sequence is that of Chaperonin GroEL, chloroplastic from Pyrenomonas salina.